Here is a 255-residue protein sequence, read N- to C-terminus: uncharacterized protein (255 aa).

Positions 1–23 (MKRLNKLVLGISFLFLVISITAG) are cleaved as a signal peptide. The N-palmitoyl cysteine moiety is linked to residue C24. C24 carries S-diacylglycerol cysteine lipidation.

It belongs to the staphylococcal tandem lipoprotein family.

The protein localises to the cell membrane. This is an uncharacterized protein from Staphylococcus aureus (strain N315).